The following is a 1027-amino-acid chain: Kinesin heavy chain isoform 5A (1027 aa).

The residue at position 2 (alanine 2) is an N-acetylalanine. Residues 9-327 form the Kinesin motor domain; that stretch reads SIKVLCRFRP…LMFGQRAKTI (319 aa). Position 86–93 (86–93) interacts with ATP; the sequence is GQTSSGKT. The segment at 174-315 is microtubule-binding; the sequence is VSSPEEILDV…PSSYNDAETK (142 aa). The interval 271 to 361 is necessary for interaction with ZFYVE27; sequence EGTKSYVPYR…KTKAQKETIA (91 aa). Residues 331-905 adopt a coiled-coil conformation; it reads ASVNLELTAE…EVDRIKEAVR (575 aa). The interval 353 to 1027 is interaction with BICD2; sequence TKAQKETIAK…FPLHQETAAS (675 aa). Threonine 397 carries the post-translational modification Phosphothreonine. The tract at residues 906 to 936 is disordered; that stretch reads YKSSGKRGHSAQIAKPVRPGHYPASSPTNPY. A globular region spans residues 907 to 1027; that stretch reads KSSGKRGHSA…FPLHQETAAS (121 aa).

Belongs to the TRAFAC class myosin-kinesin ATPase superfamily. Kinesin family. Kinesin subfamily. In terms of assembly, oligomer composed of two heavy chains and two light chains. Interacts with GRIP1. Interacts with FMR1 (via C-terminus); this interaction is increased in a mGluR-dependent manner. Interacts with BORCS5. Interacts with ZFYVE27. Interacts with VAPA, VAPB, SURF4, RAB11A (GDP-bound form), RAB11B (GDP-bound form) and RTN3 in a ZFYVE27-dependent manner. Interacts with BICD2. Interacts with DTNB. As to expression, expressed in brain.

It localises to the cytoplasm. It is found in the perinuclear region. The protein resides in the cytoskeleton. The protein localises to the perikaryon. The enzyme catalyses ATP + H2O + a kinesin associated with a microtubule at position (n) = ADP + phosphate a kinesin associated with a microtubule at position (n+1, toward the plus end).. Microtubule-dependent motor required for slow axonal transport of neurofilament proteins (NFH, NFM and NFL). Can induce formation of neurite-like membrane protrusions in non-neuronal cells in a ZFYVE27-dependent manner. The ZFYVE27-KIF5A complex contributes to the vesicular transport of VAPA, VAPB, SURF4, RAB11A, RAB11B and RTN3 proteins in neurons. Required for anterograde axonal transportation of MAPK8IP3/JIP3 which is essential for MAPK8IP3/JIP3 function in axon elongation. The sequence is that of Kinesin heavy chain isoform 5A from Rattus norvegicus (Rat).